A 96-amino-acid polypeptide reads, in one-letter code: CLAVATA3/ESR (CLE)-related protein 43 (96 aa).

Positions 1–28 are cleaved as a signal peptide; the sequence is MGCRDILLTFSVALLLISLFQIWLFREG. Residues 71-96 are disordered; the sequence is FGLNNTNSRFEDSNRRIPSSPDRLHN. The N-linked (GlcNAc...) asparagine glycan is linked to Asn74. 2 positions are modified to hydroxyproline: Pro88 and Pro91. Pro91 carries O-linked (Ara...) hydroxyproline glycosylation.

It belongs to the CLV3/ESR signal peptide family. In terms of processing, the O-glycosylation (arabinosylation) of the hydroxyproline Pro-91 enhances binding affinity of the CLE43p peptide for its receptor. As to expression, expressed at low levels in seedlings.

It is found in the secreted. It localises to the extracellular space. Its function is as follows. Extracellular signal peptide that regulates cell fate. Promotes pollen tube growth prolongation in a SKM1 and SKM2-dependent manner, especially under relatively high temperature (at 30 degrees Celsius), thus conferring tolerance against high temperature probably through the maintenance of mitochondrial activity. This is CLAVATA3/ESR (CLE)-related protein 43 from Arabidopsis thaliana (Mouse-ear cress).